The sequence spans 198 residues: NAD(P)H dehydrogenase (quinone) (198 aa).

The Flavodoxin-like domain occupies 4–189 (ILVLYYSMYG…SIARYQGEYV (186 aa)). Residues 10-15 (SMYGHI) and 78-80 (TRF) contribute to the FMN site. Tyr-12 lines the NAD(+) pocket. Substrate is bound at residue Trp-98. Residues 113–118 (STGTGG) and His-133 each bind FMN.

Belongs to the WrbA family. It depends on FMN as a cofactor.

The catalysed reaction is a quinone + NADH + H(+) = a quinol + NAD(+). It carries out the reaction a quinone + NADPH + H(+) = a quinol + NADP(+). This chain is NAD(P)H dehydrogenase (quinone), found in Salmonella paratyphi C (strain RKS4594).